The sequence spans 189 residues: Interferon alpha-21 (189 aa).

The N-terminal stretch at 1–23 (MALSFSLLMAVLVLSYKSICSLG) is a signal peptide. 2 disulfides stabilise this stretch: C24–C122 and C52–C162.

Belongs to the alpha/beta interferon family.

The protein localises to the secreted. Its function is as follows. Produced by macrophages, IFN-alpha have antiviral activities. Interferon stimulates the production of two enzymes: a protein kinase and an oligoadenylate synthetase. The sequence is that of Interferon alpha-21 (IFNA21) from Homo sapiens (Human).